Consider the following 179-residue polypeptide: Cytochrome b6-f complex iron-sulfur subunit (179 aa).

The chain crosses the membrane as a helical span at residues 20-42 (LLTFGTITGVAAGALYPIVKYFI). The Rieske domain occupies 60-161 (GNDVIVSQFL…ANVTDNDKVV (102 aa)). [2Fe-2S] cluster is bound by residues cysteine 107, histidine 109, cysteine 125, and histidine 128. A disulfide bridge connects residues cysteine 112 and cysteine 127.

The protein belongs to the Rieske iron-sulfur protein family. In terms of assembly, the 4 large subunits of the cytochrome b6-f complex are cytochrome b6, subunit IV (17 kDa polypeptide, PetD), cytochrome f and the Rieske protein, while the 4 small subunits are PetG, PetL, PetM and PetN. The complex functions as a dimer. [2Fe-2S] cluster serves as cofactor.

It is found in the cellular thylakoid membrane. It carries out the reaction 2 oxidized [plastocyanin] + a plastoquinol + 2 H(+)(in) = 2 reduced [plastocyanin] + a plastoquinone + 4 H(+)(out). Functionally, component of the cytochrome b6-f complex, which mediates electron transfer between photosystem II (PSII) and photosystem I (PSI), cyclic electron flow around PSI, and state transitions. This is Cytochrome b6-f complex iron-sulfur subunit from Microcystis aeruginosa (strain NIES-843 / IAM M-2473).